The chain runs to 446 residues: MDKLKVGLISLGCDKNRVDSEIILGNVKSAYEIVTDPKLADFIIINTCGFIESAKQESIDTILEMSQYKGKYNCRGIVVTGCLAQRYGIELMELLPEIDIMLGVNDYDKLVENINNFISDKQNKIHNCGYSDLNINEGKRILTTKSHTAYLRIAEGCDNYCTYCIIPKIRGKYRSRSIENILQECNELSLRGVKEVILIAQDTTRYGIDLYNKKMLPELMRSISKIEGIEWIRLLYCYPEEITEDIIDEIALNDKVCNYIDIPLQHISDNILKLMGRRGRKKDILRNINELRKKINDISIRTTIIVGFPGESEEDFKELKNFIENIKFDNLGVFKYSREEGTRAYKMKDQVSEELKTAREGELMMLQKHIIYSMQKYKIGNKYKVLVEGKKEGVWYGRNYAMAPDIDGVIYIKSKKELKVGTMIDVKITNSVEYDLVGVVYDESGK.

Residues 4–119 (LKVGLISLGC…LVENINNFIS (116 aa)) enclose the MTTase N-terminal domain. [4Fe-4S] cluster-binding residues include cysteine 13, cysteine 48, cysteine 82, cysteine 157, cysteine 161, and cysteine 164. In terms of domain architecture, Radical SAM core spans 143-373 (TTKSHTAYLR…MMLQKHIIYS (231 aa)). The 67-residue stretch at 376 to 442 (KYKIGNKYKV…EYDLVGVVYD (67 aa)) folds into the TRAM domain.

This sequence belongs to the methylthiotransferase family. RimO subfamily. [4Fe-4S] cluster is required as a cofactor.

The protein resides in the cytoplasm. The enzyme catalyses L-aspartate(89)-[ribosomal protein uS12]-hydrogen + (sulfur carrier)-SH + AH2 + 2 S-adenosyl-L-methionine = 3-methylsulfanyl-L-aspartate(89)-[ribosomal protein uS12]-hydrogen + (sulfur carrier)-H + 5'-deoxyadenosine + L-methionine + A + S-adenosyl-L-homocysteine + 2 H(+). Functionally, catalyzes the methylthiolation of an aspartic acid residue of ribosomal protein uS12. In Clostridium kluyveri (strain ATCC 8527 / DSM 555 / NBRC 12016 / NCIMB 10680 / K1), this protein is Ribosomal protein uS12 methylthiotransferase RimO.